A 546-amino-acid polypeptide reads, in one-letter code: Membrane protein insertase YidC (546 aa).

A helical membrane pass occupies residues 6–26 (NLLLIALLFVSFMIWQAWQVD). Residues 30-44 (QPTAQTTQQTTNTAT) show a composition bias toward low complexity. The interval 30–55 (QPTAQTTQQTTNTATGDKASQAVPGS) is disordered. Transmembrane regions (helical) follow at residues 344–364 (KFIHSFVGNWGFSIIVITFIV), 419–439 (LGGCLPLIIQMPIFLALYYML), 457–477 (LSAQDPYYILPILMGITMYFI), and 498–518 (PVIFTVFFLWFPAGLVLYYIV).

The protein belongs to the OXA1/ALB3/YidC family. Type 1 subfamily. In terms of assembly, interacts with the Sec translocase complex via SecD. Specifically interacts with transmembrane segments of nascent integral membrane proteins during membrane integration.

It localises to the cell inner membrane. In terms of biological role, required for the insertion and/or proper folding and/or complex formation of integral membrane proteins into the membrane. Involved in integration of membrane proteins that insert both dependently and independently of the Sec translocase complex, as well as at least some lipoproteins. Aids folding of multispanning membrane proteins. The protein is Membrane protein insertase YidC of Yersinia pestis.